Consider the following 68-residue polypeptide: Small integral membrane protein 10-like protein 3 (68 aa).

The polypeptide is Small integral membrane protein 10-like protein 3 (Homo sapiens (Human)).